The sequence spans 379 residues: Cytochrome b (379 aa).

Transmembrane regions (helical) follow at residues 33-53 (FGSLLGVCLMIQILTGLFLAM), 77-98 (WLIRYLHANGASMFFICLFIHV), 113-133 (WNIGIILFLTTMATAFVGYVL), and 178-198 (FFAFHFILPFIITAFALVHLL). 2 residues coordinate heme b: His-83 and His-97. Heme b-binding residues include His-182 and His-196. His-201 contacts a ubiquinone. The next 4 helical transmembrane spans lie at 226–246 (IKDLLGIFLLLLALMILALFF), 288–308 (LGGVLALILSILILAIFPLLN), 320–340 (ITQTIYWTFIANLLVLTWIGG), and 347–367 (FTTIGQIASITYFTXIIILMP).

It belongs to the cytochrome b family. As to quaternary structure, the cytochrome bc1 complex contains 11 subunits: 3 respiratory subunits (MT-CYB, CYC1 and UQCRFS1), 2 core proteins (UQCRC1 and UQCRC2) and 6 low-molecular weight proteins (UQCRH/QCR6, UQCRB/QCR7, UQCRQ/QCR8, UQCR10/QCR9, UQCR11/QCR10 and a cleavage product of UQCRFS1). This cytochrome bc1 complex then forms a dimer. Heme b is required as a cofactor.

It localises to the mitochondrion inner membrane. Its function is as follows. Component of the ubiquinol-cytochrome c reductase complex (complex III or cytochrome b-c1 complex) that is part of the mitochondrial respiratory chain. The b-c1 complex mediates electron transfer from ubiquinol to cytochrome c. Contributes to the generation of a proton gradient across the mitochondrial membrane that is then used for ATP synthesis. This chain is Cytochrome b (MT-CYB), found in Akodon affinis (Colombian grass mouse).